Consider the following 352-residue polypeptide: MPECWDGEHDIETPYGLLHVVIRGSPKGNRPAILTYHDVGLNHKLCFNTLFNLEDMQEITKHFVVCHVDAPGQQVGASQFPQGYQFPSMEQLATMLPNVVQHFGFKYVIGIGVGAGAYVLAKFALIFPDLVEGLVLMNIDPNGKGWIDWAATKLSGLTSTLPDTVLSHLFSQEELVNNTELVQSYRQQISSVVNQANLQLFWNMYNSRRDLDINRPGTVPNAKTLRCPVMLVVGDNAPAEDGVVECNSKLDPTTTTFLKMADSGGLPQVTQPGKLTEAFKYFLQGMGYIAHLKDRRLSGGAVPSASMTRLARSRTASLTSASSVDGSRPQPCTHSDSSEGMGQVNHTMEVSC.

Phosphoserine occurs at positions 298, 317, and 323. The tract at residues 301–352 (AVPSASMTRLARSRTASLTSASSVDGSRPQPCTHSDSSEGMGQVNHTMEVSC) is disordered. Over residues 308 to 323 (TRLARSRTASLTSASS) the composition is skewed to low complexity. Residues 330 to 352 (QPCTHSDSSEGMGQVNHTMEVSC) are compositionally biased toward polar residues.

It belongs to the NDRG family. As to expression, expressed in the brain and heart, weakly in the kidney; most prominently in postnatal brain where it is expressed widely in the olfactory bulb, cerebral cortex, hippocampus, cerebellum, thalamus, and medulla oblongata.

The protein localises to the cytoplasm. Its subcellular location is the cytosol. Its function is as follows. Contributes to the maintenance of intracerebral BDNF levels within the normal range, which is necessary for the preservation of spatial learning and the resistance to neuronal cell death caused by ischemic stress. May enhance growth factor-induced ERK1 and ERK2 phosphorylation, including that induced by NGF. May attenuate NGF-promoted ELK1 phosphorylation in a microtubule-dependent manner. The protein is Protein NDRG4 (Ndrg4) of Rattus norvegicus (Rat).